Here is a 232-residue protein sequence, read N- to C-terminus: Imidazoleglycerol-phosphate dehydratase (232 aa).

The protein belongs to the imidazoleglycerol-phosphate dehydratase family.

It carries out the reaction D-erythro-1-(imidazol-4-yl)glycerol 3-phosphate = 3-(imidazol-4-yl)-2-oxopropyl phosphate + H2O. It functions in the pathway amino-acid biosynthesis; L-histidine biosynthesis; L-histidine from 5-phospho-alpha-D-ribose 1-diphosphate: step 6/9. This Lachancea kluyveri (strain ATCC 58438 / CBS 3082 / BCRC 21498 / NBRC 1685 / JCM 7257 / NCYC 543 / NRRL Y-12651) (Yeast) protein is Imidazoleglycerol-phosphate dehydratase (HIS3).